The chain runs to 94 residues: Large ribosomal subunit protein bL27 (94 aa).

A propeptide spanning residues 1–9 (MNLANLQLF) is cleaved from the precursor. The segment at 11 to 34 (HKKGGGSTSNGRDSQAKRLGAKAA) is disordered.

Belongs to the bacterial ribosomal protein bL27 family. The N-terminus is cleaved by ribosomal processing cysteine protease Prp.

In Streptococcus pyogenes serotype M3 (strain ATCC BAA-595 / MGAS315), this protein is Large ribosomal subunit protein bL27.